We begin with the raw amino-acid sequence, 2135 residues long: Protein SUBSTANDARD STARCH GRAIN 4, chloroplastic (2135 aa).

Low complexity-rich tracts occupy residues 1–10 (MSHCLRASPF) and 72–84 (QHQP…RQQQ). Residues 1–42 (MSHCLRASPFLSPPPPLLHPSRRRRHRQGGCIHTSPGTRPLV) constitute a chloroplast transit peptide. 2 disordered regions span residues 1–44 (MSHC…LVAR) and 58–89 (SDSS…PPPP). The Stromal portion of the chain corresponds to 43–104 (ARARFDPPPL…ASLAPLWREG (62 aa)). A helical transmembrane segment spans residues 105 to 125 (LFLVRCSVFAAALSVAAALSW). Topologically, residues 126 to 2135 (YAQLRARSFV…LFEYSATSQG (2010 aa)) are chloroplast intermembrane. The span at 361–370 (RRRYRRKAHS) shows a compositional bias: basic residues. 3 disordered regions span residues 361–382 (RRRY…SSQQ), 401–492 (SGNP…QVSE), and 1843–1869 (FLGS…SFKP). Polar residues-rich tracts occupy residues 373–382 (ISDTDNSSQQ), 454–490 (NFAS…NEQV), and 1846–1856 (SLSTSPDGQQS). Basic and acidic residues predominate over residues 1857-1866 (ETERTPEHGS).

Belongs to the TamB family. As to quaternary structure, part of the TIC complex, which can interact with components of the TOC complex to form a larger import complex. In terms of tissue distribution, highly expressed in third leaf and developing seeds. Expressed in anthers, pistils, flag leaves and young panicles.

It is found in the plastid. The protein localises to the chloroplast inner membrane. It localises to the chloroplast intermembrane space. The protein resides in the chloroplast. Its subcellular location is the amyloplast. Functionally, part of the inner chloroplast membrane translocon complex (TIC) which associates with the outer chloroplast membrane translocon complex (TOC) and forms a supercomplex involved in protein precursor import into the chloroplast stroma. Required for the regulation of starch granule size in amyloplasts. This Oryza sativa subsp. japonica (Rice) protein is Protein SUBSTANDARD STARCH GRAIN 4, chloroplastic.